The primary structure comprises 587 residues: Protein FRIGIDA-ESSENTIAL 1 (587 aa).

A C3H1-type zinc finger spans residues 96-123 (KRAALPCKFFAKGWCFNGVSCKFLHVKE). 3 disordered regions span residues 264–346 (DMGS…SFTI), 368–421 (GDRP…HQET), and 467–492 (IKPAGHDSWHRSDGSSYKKTKKSDEI). The span at 294 to 304 (NGNSLSGSGSL) shows a compositional bias: low complexity. Basic and acidic residues predominate over residues 470 to 479 (AGHDSWHRSD).

Component of the transcription activator complex FRI-C composed of FRI, FRL1, SUF4, FLX and FES1. Interacts with FLX, (via C-terminus) with FRI (via C-terminus), and with RIN1, a component of the SWR1 chromatin-remodeling complex. In terms of tissue distribution, expressed in root and shoot apices and vasculature.

The protein resides in the nucleus. In terms of biological role, transcriptional activator involved in the FRIGIDA-mediated vernalization pathway, but not in the autonomous flowering pathway. Acts cooperatively with FRI (FRIGIDA) or FRL1 (FRIGIDA-LIKE 1) to promote FLC (FLOWERING LOCUS C) expression. Required for the stabilization of the FRI-C complex. The chain is Protein FRIGIDA-ESSENTIAL 1 (FES1) from Arabidopsis thaliana (Mouse-ear cress).